The primary structure comprises 170 residues: Peptide deformylase (170 aa).

Positions 91 and 133 each coordinate Fe cation. Glu134 is a catalytic residue. Residue His137 coordinates Fe cation.

The protein belongs to the polypeptide deformylase family. It depends on Fe(2+) as a cofactor.

The catalysed reaction is N-terminal N-formyl-L-methionyl-[peptide] + H2O = N-terminal L-methionyl-[peptide] + formate. Its function is as follows. Removes the formyl group from the N-terminal Met of newly synthesized proteins. Requires at least a dipeptide for an efficient rate of reaction. N-terminal L-methionine is a prerequisite for activity but the enzyme has broad specificity at other positions. In Aliivibrio fischeri (strain ATCC 700601 / ES114) (Vibrio fischeri), this protein is Peptide deformylase.